The sequence spans 292 residues: 1D-myo-inositol 2-acetamido-2-deoxy-alpha-D-glucopyranoside deacetylase (292 aa).

3 residues coordinate Zn(2+): His12, Asp15, and His147.

The protein belongs to the MshB deacetylase family. Requires Zn(2+) as cofactor.

It carries out the reaction 1D-myo-inositol 2-acetamido-2-deoxy-alpha-D-glucopyranoside + H2O = 1D-myo-inositol 2-amino-2-deoxy-alpha-D-glucopyranoside + acetate. Its function is as follows. Catalyzes the deacetylation of 1D-myo-inositol 2-acetamido-2-deoxy-alpha-D-glucopyranoside (GlcNAc-Ins) in the mycothiol biosynthesis pathway. The protein is 1D-myo-inositol 2-acetamido-2-deoxy-alpha-D-glucopyranoside deacetylase of Rhodococcus jostii (strain RHA1).